A 389-amino-acid polypeptide reads, in one-letter code: GTPase Obg (389 aa).

The 159-residue stretch at 1 to 159 folds into the Obg domain; the sequence is MKFVDEAVIK…RELRLELLLL (159 aa). One can recognise an OBG-type G domain in the interval 160–333; it reads ADVGMLGLPN…LCYKLADFME (174 aa). Residues 166-173, 191-195, 213-216, 283-286, and 314-316 contribute to the GTP site; these read GLPNAGKS, FTTLI, DIPG, NKVD, and SAV. Mg(2+) is bound by residues serine 173 and threonine 193. A disordered region spans residues 359 to 389; the sequence is NQGEVITEDDDDDWDDWDDEEDDGHVIYVRE. Acidic residues predominate over residues 364-381; sequence ITEDDDDDWDDWDDEEDD.

The protein belongs to the TRAFAC class OBG-HflX-like GTPase superfamily. OBG GTPase family. As to quaternary structure, monomer. Mg(2+) is required as a cofactor.

It localises to the cytoplasm. Functionally, an essential GTPase which binds GTP, GDP and possibly (p)ppGpp with moderate affinity, with high nucleotide exchange rates and a fairly low GTP hydrolysis rate. Plays a role in control of the cell cycle, stress response, ribosome biogenesis and in those bacteria that undergo differentiation, in morphogenesis control. The sequence is that of GTPase Obg from Vibrio vulnificus (strain CMCP6).